The following is a 137-amino-acid chain: Small ribosomal subunit protein uS19 (137 aa).

Belongs to the universal ribosomal protein uS19 family.

Its function is as follows. Protein S19 forms a complex with S13 that binds strongly to the 16S ribosomal RNA. This chain is Small ribosomal subunit protein uS19, found in Methanospirillum hungatei JF-1 (strain ATCC 27890 / DSM 864 / NBRC 100397 / JF-1).